Consider the following 400-residue polypeptide: S-adenosylmethionine synthase (400 aa).

136–141 (GQGSVD) lines the ATP pocket.

This sequence belongs to the AdoMet synthase 2 family. Mg(2+) is required as a cofactor.

The catalysed reaction is L-methionine + ATP + H2O = S-adenosyl-L-methionine + phosphate + diphosphate. It participates in amino-acid biosynthesis; S-adenosyl-L-methionine biosynthesis; S-adenosyl-L-methionine from L-methionine: step 1/1. Its function is as follows. Catalyzes the formation of S-adenosylmethionine from methionine and ATP. In Thermoplasma volcanium (strain ATCC 51530 / DSM 4299 / JCM 9571 / NBRC 15438 / GSS1), this protein is S-adenosylmethionine synthase.